The chain runs to 160 residues: Cytochrome b6-f complex subunit 4 (160 aa).

A run of 3 helical transmembrane segments spans residues 36-56 (LLYI…GLAV), 95-115 (LLGI…PFIE), and 128-148 (IAMA…IGAC).

Belongs to the cytochrome b family. PetD subfamily. The 4 large subunits of the cytochrome b6-f complex are cytochrome b6, subunit IV (17 kDa polypeptide, PetD), cytochrome f and the Rieske protein, while the 4 small subunits are PetG, PetL, PetM and PetN. The complex functions as a dimer.

It localises to the cellular thylakoid membrane. Its function is as follows. Component of the cytochrome b6-f complex, which mediates electron transfer between photosystem II (PSII) and photosystem I (PSI), cyclic electron flow around PSI, and state transitions. The protein is Cytochrome b6-f complex subunit 4 of Prochlorococcus marinus (strain MIT 9303).